A 208-amino-acid chain; its full sequence is Small ribosomal subunit protein uS4 (208 aa).

The S4 RNA-binding domain occupies 95-155 (TRLDALVLRA…AKSQTMVPFQ (61 aa)).

It belongs to the universal ribosomal protein uS4 family. Part of the 30S ribosomal subunit. Contacts protein S5. The interaction surface between S4 and S5 is involved in control of translational fidelity.

In terms of biological role, one of the primary rRNA binding proteins, it binds directly to 16S rRNA where it nucleates assembly of the body of the 30S subunit. Its function is as follows. With S5 and S12 plays an important role in translational accuracy. In Bifidobacterium adolescentis (strain ATCC 15703 / DSM 20083 / NCTC 11814 / E194a), this protein is Small ribosomal subunit protein uS4.